A 427-amino-acid chain; its full sequence is Mucorpepsin (427 aa).

An N-terminal signal peptide occupies residues 1-22 (MLFSKISSAILLTAASFALTSA). Residues 23–66 (RPVSKQSDADDKLLALPLTSVNRKYSQTKHGQQAAEKLGGIKAF) constitute a propeptide, activation peptide. One can recognise a Peptidase A1 domain in the interval 86 to 418 (YAIPVSIGTP…DFGKNRIGFA (333 aa)). Asp104 is a catalytic residue. An intrachain disulfide couples Cys117 to Cys123. An N-linked (GlcNAc...) asparagine glycan is attached at Asn254. Residue Asp303 is part of the active site. A disulfide bond links Cys338 and Cys382.

Belongs to the peptidase A1 family.

The catalysed reaction is Hydrolysis of proteins, favoring hydrophobic residues at P1 and P1'. Clots milk. Does not accept Lys at P1, and hence does not activate trypsinogen.. Functionally, this enzyme, capable of clotting milk is frequently used for cheese production. The polypeptide is Mucorpepsin (Rhizomucor pusillus).